Here is a 152-residue protein sequence, read N- to C-terminus: UPF0266 membrane protein YobD (152 aa).

3 helical membrane-spanning segments follow: residues leucine 6 to methionine 26, valine 45 to histidine 65, and alanine 67 to isoleucine 87.

The protein belongs to the UPF0266 family.

The protein resides in the cell inner membrane. The chain is UPF0266 membrane protein YobD from Salmonella paratyphi C (strain RKS4594).